The sequence spans 309 residues: Homoserine O-succinyltransferase (309 aa).

The active-site Acyl-thioester intermediate is the Cys142. Residues Lys163 and Ser192 each coordinate substrate. The active-site Proton acceptor is His235. Glu237 is a catalytic residue. Arg249 serves as a coordination point for substrate.

It belongs to the MetA family.

It is found in the cytoplasm. The enzyme catalyses L-homoserine + succinyl-CoA = O-succinyl-L-homoserine + CoA. The protein operates within amino-acid biosynthesis; L-methionine biosynthesis via de novo pathway; O-succinyl-L-homoserine from L-homoserine: step 1/1. In terms of biological role, transfers a succinyl group from succinyl-CoA to L-homoserine, forming succinyl-L-homoserine. The sequence is that of Homoserine O-succinyltransferase from Klebsiella pneumoniae subsp. pneumoniae (strain ATCC 700721 / MGH 78578).